A 793-amino-acid polypeptide reads, in one-letter code: Nuclear cap-binding protein subunit 1 (793 aa).

An MIF4G domain is found at Glu-28–Arg-242.

The protein belongs to the NCBP1 family. In terms of assembly, component of the nuclear cap-binding complex (CBC), a heterodimer composed of ncbp-1 and ncbp-1 that interacts with m7GpppG-capped RNA.

The protein localises to the nucleus. Functionally, component of the cap-binding complex (CBC), which binds cotranscriptionally to the 5'-cap of pre-mRNAs and is involved in various processes such as pre-mRNA splicing and RNA-mediated gene silencing (RNAi). The CBC complex is involved in miRNA-mediated RNA interference and is required for primary microRNAs (miRNAs) processing. In the CBC complex, ncbp-1 does not bind directly capped RNAs (m7GpppG-capped RNA) but is required to stabilize the movement of the N-terminal loop of ncbp-2 and lock the CBC into a high affinity cap-binding state with the cap structure. The chain is Nuclear cap-binding protein subunit 1 (ncbp-1) from Caenorhabditis briggsae.